Here is a 749-residue protein sequence, read N- to C-terminus: Ribosome-releasing factor 2, mitochondrial (749 aa).

The transit peptide at 1-22 (MLLLLCNRSVVPRGIRRILRTA) directs the protein to the mitochondrion. Positions 44–322 (KNIRNIGILA…AVLKYLPAPN (279 aa)) constitute a tr-type G domain. Residues 53-60 (AHIDGGKT), 117-121 (DTPGH), and 171-174 (NKMD) contribute to the GTP site.

It belongs to the TRAFAC class translation factor GTPase superfamily. Classic translation factor GTPase family. EF-G/EF-2 subfamily.

The protein localises to the mitochondrion. Functionally, mitochondrial GTPase that mediates the disassembly of ribosomes from messenger RNA at the termination of mitochondrial protein biosynthesis. Not involved in the GTP-dependent ribosomal translocation step during translation elongation. This is Ribosome-releasing factor 2, mitochondrial from Culex quinquefasciatus (Southern house mosquito).